Consider the following 421-residue polypeptide: Putative zinc finger protein R05D3.3 (421 aa).

2 consecutive C2H2-type zinc fingers follow at residues 207-228 (VLCVICNEWICSRNRKNHIEAH) and 234-257 (YKCSACSYARRREIFVDQHIRTQH). The segment at 400-421 (GSSITDSNEPGPSEIKKELAEV) is disordered.

It localises to the nucleus. The chain is Putative zinc finger protein R05D3.3 from Caenorhabditis elegans.